A 248-amino-acid polypeptide reads, in one-letter code: uncharacterized protein (248 aa).

Residues 104–122 (CDVAACVGATWIAGGFAGA) form a helical membrane-spanning segment.

The protein resides in the membrane. This is an uncharacterized protein from Escherichia coli (strain K12).